Reading from the N-terminus, the 368-residue chain is 4-hydroxy-3-methylbut-2-en-1-yl diphosphate synthase (flavodoxin) (368 aa).

Positions 268, 271, 303, and 310 each coordinate [4Fe-4S] cluster.

It belongs to the IspG family. Requires [4Fe-4S] cluster as cofactor.

It catalyses the reaction (2E)-4-hydroxy-3-methylbut-2-enyl diphosphate + oxidized [flavodoxin] + H2O + 2 H(+) = 2-C-methyl-D-erythritol 2,4-cyclic diphosphate + reduced [flavodoxin]. The protein operates within isoprenoid biosynthesis; isopentenyl diphosphate biosynthesis via DXP pathway; isopentenyl diphosphate from 1-deoxy-D-xylulose 5-phosphate: step 5/6. Its function is as follows. Converts 2C-methyl-D-erythritol 2,4-cyclodiphosphate (ME-2,4cPP) into 1-hydroxy-2-methyl-2-(E)-butenyl 4-diphosphate. This Bacillus cytotoxicus (strain DSM 22905 / CIP 110041 / 391-98 / NVH 391-98) protein is 4-hydroxy-3-methylbut-2-en-1-yl diphosphate synthase (flavodoxin).